A 177-amino-acid polypeptide reads, in one-letter code: RNA pyrophosphohydrolase (177 aa).

One can recognise a Nudix hydrolase domain in the interval 6-149; sequence GYRPNVGIVI…KRDVYRRVMK (144 aa). The Nudix box motif lies at 38 to 59; sequence GGINAGETAEQAMYRELFEEVG.

Belongs to the Nudix hydrolase family. RppH subfamily. It depends on a divalent metal cation as a cofactor.

Functionally, accelerates the degradation of transcripts by removing pyrophosphate from the 5'-end of triphosphorylated RNA, leading to a more labile monophosphorylated state that can stimulate subsequent ribonuclease cleavage. The protein is RNA pyrophosphohydrolase of Edwardsiella ictaluri (strain 93-146).